Here is a 61-residue protein sequence, read N- to C-terminus: Small ribosomal subunit protein uS14 (61 aa).

Positions 24, 27, 40, and 43 each coordinate Zn(2+).

Belongs to the universal ribosomal protein uS14 family. Zinc-binding uS14 subfamily. Part of the 30S ribosomal subunit. Contacts proteins S3 and S10. Zn(2+) serves as cofactor.

Functionally, binds 16S rRNA, required for the assembly of 30S particles and may also be responsible for determining the conformation of the 16S rRNA at the A site. The polypeptide is Small ribosomal subunit protein uS14 (Frankia alni (strain DSM 45986 / CECT 9034 / ACN14a)).